Reading from the N-terminus, the 206-residue chain is VEL1-related protein SCY_5430 (206 aa).

The first 19 residues, 1-19 (MSFLNIFTFFSVLVSVATA), serve as a signal peptide directing secretion.

It belongs to the VEL1 family.

Its subcellular location is the cytoplasm. It localises to the cytosol. This chain is VEL1-related protein SCY_5430, found in Saccharomyces cerevisiae (strain YJM789) (Baker's yeast).